The primary structure comprises 298 residues: 4-hydroxy-tetrahydrodipicolinate synthase (298 aa).

Threonine 51 lines the pyruvate pocket. Tyrosine 139 functions as the Proton donor/acceptor in the catalytic mechanism. The active-site Schiff-base intermediate with substrate is lysine 167. Pyruvate is bound at residue isoleucine 209.

The protein belongs to the DapA family. In terms of assembly, homotetramer; dimer of dimers.

It is found in the cytoplasm. The enzyme catalyses L-aspartate 4-semialdehyde + pyruvate = (2S,4S)-4-hydroxy-2,3,4,5-tetrahydrodipicolinate + H2O + H(+). It participates in amino-acid biosynthesis; L-lysine biosynthesis via DAP pathway; (S)-tetrahydrodipicolinate from L-aspartate: step 3/4. In terms of biological role, catalyzes the condensation of (S)-aspartate-beta-semialdehyde [(S)-ASA] and pyruvate to 4-hydroxy-tetrahydrodipicolinate (HTPA). The polypeptide is 4-hydroxy-tetrahydrodipicolinate synthase (Haemophilus influenzae (strain 86-028NP)).